The following is a 629-amino-acid chain: Chaperone protein DnaK (629 aa).

Over residues glutamine 576 to glycine 587 the composition is skewed to low complexity. The segment at glutamine 576–glutamate 629 is disordered. The span at alanine 588–glycine 607 shows a compositional bias: gly residues. The span at alanine 611–glutamate 629 shows a compositional bias: acidic residues.

Belongs to the heat shock protein 70 family.

Its function is as follows. Acts as a chaperone. The chain is Chaperone protein DnaK from Halobacterium salinarum (strain ATCC 29341 / DSM 671 / R1).